The chain runs to 299 residues: MNEINESYDTDSVREFTVSDADAGPYALAEGPDGALWFTLVHRGAVARRDPDDGRVTVHPVGDGPTVIAPGPDGALWFTEYRAHRIGRITPEGHYASFAPLTPEGGPFGITAGPDGAMWFTLSSADRVGRVTMDGEVTEHPAPGAFPSALTAGPDGALWCTLNQGNAIGRLTPDGHGTAYPLPTPGAAPVGIAAGPDGALWFTEIGAGRIGRITVTGDLTEYPLSDPAARPHAVTAGPNGALWFTEWGSGRVGRITVDGRVTSYPLSRTDCEPHGIAVHDGALWCALETGSLARIQVPA.

Histidine 232 contacts substrate. Mg(2+) is bound at residue glutamate 272. Histidine 274 acts as the Proton acceptor in catalysis. Position 288 (glutamate 288) interacts with Mg(2+).

Belongs to the Vgb family. Monomer. It depends on Mg(2+) as a cofactor.

In terms of biological role, inactivates the type B streptogramin antibiotics by linearizing the lactone ring at the ester linkage, generating a free phenylglycine carboxylate and converting the threonyl moiety into 2-amino-butenoic acid. This Streptomyces coelicolor (strain ATCC BAA-471 / A3(2) / M145) protein is Virginiamycin B lyase (vgb).